Consider the following 61-residue polypeptide: Small ribosomal subunit protein uS14 (61 aa).

Zn(2+) is bound by residues cysteine 24, cysteine 27, cysteine 40, and cysteine 43.

This sequence belongs to the universal ribosomal protein uS14 family. Zinc-binding uS14 subfamily. Part of the 30S ribosomal subunit. Contacts proteins S3 and S10. Requires Zn(2+) as cofactor.

Binds 16S rRNA, required for the assembly of 30S particles and may also be responsible for determining the conformation of the 16S rRNA at the A site. The chain is Small ribosomal subunit protein uS14 from Desulforamulus reducens (strain ATCC BAA-1160 / DSM 100696 / MI-1) (Desulfotomaculum reducens).